The primary structure comprises 137 residues: Small ribosomal subunit protein uS12 (137 aa).

2 disordered regions span residues 1–21 (MPTI…KSDS) and 36–57 (TKLS…TPKK). Residue D102 is modified to 3-methylthioaspartic acid.

This sequence belongs to the universal ribosomal protein uS12 family. In terms of assembly, part of the 30S ribosomal subunit. Contacts proteins S8 and S17. May interact with IF1 in the 30S initiation complex.

Functionally, with S4 and S5 plays an important role in translational accuracy. Interacts with and stabilizes bases of the 16S rRNA that are involved in tRNA selection in the A site and with the mRNA backbone. Located at the interface of the 30S and 50S subunits, it traverses the body of the 30S subunit contacting proteins on the other side and probably holding the rRNA structure together. The combined cluster of proteins S8, S12 and S17 appears to hold together the shoulder and platform of the 30S subunit. This chain is Small ribosomal subunit protein uS12, found in Streptococcus agalactiae serotype Ia (strain ATCC 27591 / A909 / CDC SS700).